Consider the following 652-residue polypeptide: DNA ligase (652 aa).

Residues 29-33, 78-79, and E107 contribute to the NAD(+) site; these read DSQYD and SL. K109 serves as the catalytic N6-AMP-lysine intermediate. NAD(+) contacts are provided by R130, E164, K278, and K302. Zn(2+) contacts are provided by C395, C398, C413, and C418. A BRCT domain is found at 577–652; the sequence is STDAQLSGLT…IQDEDWLLNL (76 aa).

Belongs to the NAD-dependent DNA ligase family. LigA subfamily. Requires Mg(2+) as cofactor. The cofactor is Mn(2+).

The catalysed reaction is NAD(+) + (deoxyribonucleotide)n-3'-hydroxyl + 5'-phospho-(deoxyribonucleotide)m = (deoxyribonucleotide)n+m + AMP + beta-nicotinamide D-nucleotide.. DNA ligase that catalyzes the formation of phosphodiester linkages between 5'-phosphoryl and 3'-hydroxyl groups in double-stranded DNA using NAD as a coenzyme and as the energy source for the reaction. It is essential for DNA replication and repair of damaged DNA. The sequence is that of DNA ligase from Streptococcus agalactiae serotype III (strain NEM316).